We begin with the raw amino-acid sequence, 474 residues long: Glutamate--tRNA ligase (474 aa).

The 'HIGH' region signature appears at Pro-11 to Gly-21. A 'KMSKS' region motif is present at residues Lys-240 to Arg-244. Lys-243 provides a ligand contact to ATP.

This sequence belongs to the class-I aminoacyl-tRNA synthetase family. Glutamate--tRNA ligase type 1 subfamily. In terms of assembly, monomer.

It is found in the cytoplasm. It carries out the reaction tRNA(Glu) + L-glutamate + ATP = L-glutamyl-tRNA(Glu) + AMP + diphosphate. Functionally, catalyzes the attachment of glutamate to tRNA(Glu) in a two-step reaction: glutamate is first activated by ATP to form Glu-AMP and then transferred to the acceptor end of tRNA(Glu). The protein is Glutamate--tRNA ligase of Bradyrhizobium sp. (strain BTAi1 / ATCC BAA-1182).